We begin with the raw amino-acid sequence, 382 residues long: Flap endonuclease 1 (382 aa).

The tract at residues 1–104 (MGIKGLSQVI…GELEKRTERR (104 aa)) is N-domain. A Mg(2+)-binding site is contributed by D34. 2 residues coordinate DNA: R47 and R70. Mg(2+)-binding residues include D86, E158, E160, D179, and D181. Residues 122 to 253 (EAEKFERRLV…KKAVELIKQH (132 aa)) form an I-domain region. E158 is a DNA binding site. Residues G231 and D233 each contribute to the DNA site. D233 is a binding site for Mg(2+). Residues 336–344 (TQGRIDSFF) are interaction with PCNA. Residues 359-368 (KAQEEAEKMK) are compositionally biased toward basic and acidic residues. Positions 359–382 (KAQEEAEKMKKGGKKSGPPKKKAK) are disordered. Over residues 369–382 (KGGKKSGPPKKKAK) the composition is skewed to basic residues.

It belongs to the XPG/RAD2 endonuclease family. FEN1 subfamily. In terms of assembly, interacts with PCNA. Three molecules of crn-1 bind to one PCNA trimer with each molecule binding to one PCNA monomer. PCNA stimulates the nuclease activity without altering cleavage specificity. Requires Mg(2+) as cofactor. In terms of processing, phosphorylated. Phosphorylation upon DNA damage induces relocalization to the nuclear plasma.

It is found in the nucleus. The protein resides in the nucleolus. It localises to the nucleoplasm. The protein localises to the mitochondrion. Its function is as follows. Structure-specific nuclease with 5'-flap endonuclease and 5'-3' exonuclease activities involved in DNA replication and repair. During DNA replication, cleaves the 5'-overhanging flap structure that is generated by displacement synthesis when DNA polymerase encounters the 5'-end of a downstream Okazaki fragment. It enters the flap from the 5'-end and then tracks to cleave the flap base, leaving a nick for ligation. Also involved in the long patch base excision repair (LP-BER) pathway, by cleaving within the apurinic/apyrimidinic (AP) site-terminated flap. Acts as a genome stabilization factor that prevents flaps from equilibrating into structures that lead to duplications and deletions. Also possesses 5'-3' exonuclease activity on nicked or gapped double-stranded DNA, and exhibits RNase H activity. Also involved in replication and repair of rDNA and in repairing mitochondrial DNA. In Caenorhabditis briggsae, this protein is Flap endonuclease 1.